A 295-amino-acid polypeptide reads, in one-letter code: Fatty acid desaturase 4-like 1, chloroplastic (295 aa).

A chloroplast-targeting transit peptide spans 1–29 (MAVSFQTKNPLRPITNIPRSYGPTRVRVT). 3 helical membrane passes run 72–92 (WVAA…IGGF), 102–122 (LACY…HWAI), and 175–195 (LAIN…CILL).

This sequence belongs to the fatty acid desaturase CarF family.

The protein localises to the plastid. Its subcellular location is the chloroplast membrane. It participates in lipid metabolism; fatty acid metabolism. In terms of biological role, fatty acid desaturase involved in the production of chloroplast-specific phosphatidylglycerol molecular species. Catalyzes the formation of a trans double bond introduced close to the carboxyl group of palmitic acid, which is specifically esterified to the sn-2 glyceryl carbon of phosphatidylglycerol. This chain is Fatty acid desaturase 4-like 1, chloroplastic (FAD4L1), found in Arabidopsis thaliana (Mouse-ear cress).